The primary structure comprises 138 residues: Prefoldin subunit alpha (138 aa).

The protein belongs to the prefoldin subunit alpha family. As to quaternary structure, heterohexamer of two alpha and four beta subunits.

The protein resides in the cytoplasm. Molecular chaperone capable of stabilizing a range of proteins. Seems to fulfill an ATP-independent, HSP70-like function in archaeal de novo protein folding. The polypeptide is Prefoldin subunit alpha (Methanococcoides burtonii (strain DSM 6242 / NBRC 107633 / OCM 468 / ACE-M)).